The chain runs to 96 residues: Sec-independent protein translocase protein TatA (96 aa).

Residues 1–21 (MGFSSIWHWIIVLVVVLLLFG) form a helical membrane-spanning segment. The disordered stretch occupies residues 42–96 (GMADDEDDEAASVSAERRGIEDGKPAQTIYPPQQPQQPQQPPQQPPVHRDDAPRG). Residues 56–65 (AERRGIEDGK) are compositionally biased toward basic and acidic residues. The segment covering 73 to 86 (PQQPQQPQQPPQQP) has biased composition (pro residues).

Belongs to the TatA/E family. As to quaternary structure, the Tat system comprises two distinct complexes: a TatABC complex, containing multiple copies of TatA, TatB and TatC subunits, and a separate TatA complex, containing only TatA subunits. Substrates initially bind to the TatABC complex, which probably triggers association of the separate TatA complex to form the active translocon.

It is found in the cell inner membrane. Functionally, part of the twin-arginine translocation (Tat) system that transports large folded proteins containing a characteristic twin-arginine motif in their signal peptide across membranes. TatA could form the protein-conducting channel of the Tat system. In Rhodospirillum rubrum (strain ATCC 11170 / ATH 1.1.1 / DSM 467 / LMG 4362 / NCIMB 8255 / S1), this protein is Sec-independent protein translocase protein TatA.